A 454-amino-acid chain; its full sequence is Anthocyanidin 3-O-galactosyltransferase 3GT6 (454 aa).

The signal sequence occupies residues 1-21; it reads MTNSSKGRHVAVLPFPFSTHA. Positions 18 and 20 each coordinate an anthocyanidin. The active-site Proton acceptor is the H20. The active-site Charge relay is the D117. An an anthocyanidin-binding site is contributed by H148. 7 residues coordinate UDP-alpha-D-glucose: A331, Q333, H348, W351, N352, S353, and E356. Position 371 (G371) interacts with an anthocyanidin. D372 is a binding site for UDP-alpha-D-glucose. N441 carries an N-linked (GlcNAc...) asparagine glycan.

This sequence belongs to the UDP-glycosyltransferase family. Monomer. Mostly expressed in leaves and flowers and, to a lower extent, in roots. In flowers, mainly observed in petals, stamens and scapes, and at lower levels in pistils and toruses.

It catalyses the reaction cyanidin + UDP-alpha-D-galactose = cyanidin 3-O-beta-D-galactoside + UDP + H(+). It carries out the reaction cyanidin + UDP-alpha-D-glucose = cyanidin 3-O-beta-D-glucoside + UDP + H(+). The enzyme catalyses delphinidin + UDP-alpha-D-glucose = delphinidin 3-O-beta-D-glucoside + UDP. The catalysed reaction is peonidin + UDP-alpha-D-glucose = peonidin 3-O-beta-D-glucoside + UDP. It catalyses the reaction pelargonidin + UDP-alpha-D-glucose = pelargonidin 3-O-beta-D-glucoside + UDP. It carries out the reaction delphinidin + UDP-alpha-D-galactose = delphinidin 3-O-beta-D-galactoside + UDP + H(+). The enzyme catalyses pelargonidin + UDP-alpha-D-galactose = pelargonidin 3-O-beta-D-galactoside betaine + UDP. The catalysed reaction is peonidin + UDP-alpha-D-galactose = peonidin 3-O-beta-D-galactoside + UDP. It catalyses the reaction petunidin + UDP-alpha-D-galactose = petunidin 3-O-beta-D-galactoside + UDP. It carries out the reaction petunidin + UDP-alpha-D-glucose = petunidin 3-O-beta-D-glucoside + UDP. The enzyme catalyses an anthocyanidin + UDP-alpha-D-glucose + H(+) = an anthocyanidin 3-O-beta-D-glucoside + UDP. The catalysed reaction is an anthocyanidin + UDP-alpha-D-galactose = an anthocyanidin 3-O-beta-D-galactoside + UDP. The protein operates within pigment biosynthesis; anthocyanin biosynthesis. Its function is as follows. Flavonoid 3-O-glycosyltransferase involved in the biosynthesis of anthocyanins conferring flower red/pink colors, mainly anthocyanidin 3-O-glycosides. Catalyzes the addition of UDP-sugar to the 3-OH of anthocyanidin, with a preference for UDP-galactose (UDP-Gal) as sugar donor and cyanidin as substrate; able to use delphinidin, pelargonidin, peonidin and petunidin as substrates in the presence of UDP-Gal, but barely active on malvidin. Can also use UDP-glucose (UDP-Glu) as sugar donor with cyanidin, delphinidin, pelargonidin, peonidin and petunidin as substrates, but not active on malvidin. This chain is Anthocyanidin 3-O-galactosyltransferase 3GT6, found in Rhododendron delavayi (Rhododendron).